We begin with the raw amino-acid sequence, 393 residues long: Formate-dependent phosphoribosylglycinamide formyltransferase (393 aa).

Residues Glu22–Leu23 and Glu82 each bind N(1)-(5-phospho-beta-D-ribosyl)glycinamide. ATP-binding positions include Arg114, Lys155, Ser160 to Gln165, Glu195 to Val198, and Glu203. An ATP-grasp domain is found at Arg119–Thr308. Mg(2+)-binding residues include Glu267 and Glu279. Residues Asp286, Lys356, and Arg363 to Arg364 contribute to the N(1)-(5-phospho-beta-D-ribosyl)glycinamide site.

This sequence belongs to the PurK/PurT family. In terms of assembly, homodimer.

It carries out the reaction N(1)-(5-phospho-beta-D-ribosyl)glycinamide + formate + ATP = N(2)-formyl-N(1)-(5-phospho-beta-D-ribosyl)glycinamide + ADP + phosphate + H(+). It participates in purine metabolism; IMP biosynthesis via de novo pathway; N(2)-formyl-N(1)-(5-phospho-D-ribosyl)glycinamide from N(1)-(5-phospho-D-ribosyl)glycinamide (formate route): step 1/1. In terms of biological role, involved in the de novo purine biosynthesis. Catalyzes the transfer of formate to 5-phospho-ribosyl-glycinamide (GAR), producing 5-phospho-ribosyl-N-formylglycinamide (FGAR). Formate is provided by PurU via hydrolysis of 10-formyl-tetrahydrofolate. This is Formate-dependent phosphoribosylglycinamide formyltransferase from Vibrio cholerae serotype O1 (strain M66-2).